We begin with the raw amino-acid sequence, 338 residues long: MKAPFTSLAGFRAVFDALPQPDAAALEAATARNGQLTKPKGALGRLEGLAIWYAGWVGDGRPALERPQVAIFAGNHGIAARGVSAFPPEVTVQMVANYRAGGAAVNQLCKVAGASMTVTELDLDRPTLDFTQGPAMTEDELVAALAAGWEAVEDEADLLVVGEMGIGNTTAAAAIAAALFGGSAGEWTGRGSGVEGAALEGKTLVVAQGLERHAEALSDPVEVLRRLGGRELAAMAGAIARARVGRIPVILDGFICSAAAAVLHAIRPGALDHAVAGHVSAEGAHPAVLARLGKEPILELGMRLGEGTGAIVAINILRSAVACLSGMATFAEAGVAEG.

The active-site Proton acceptor is the glutamate 306.

It belongs to the CobT family.

The catalysed reaction is 5,6-dimethylbenzimidazole + nicotinate beta-D-ribonucleotide = alpha-ribazole 5'-phosphate + nicotinate + H(+). Its pathway is nucleoside biosynthesis; alpha-ribazole biosynthesis; alpha-ribazole from 5,6-dimethylbenzimidazole: step 1/2. Catalyzes the synthesis of alpha-ribazole-5'-phosphate from nicotinate mononucleotide (NAMN) and 5,6-dimethylbenzimidazole (DMB). This is Nicotinate-nucleotide--dimethylbenzimidazole phosphoribosyltransferase from Cereibacter sphaeroides (strain ATCC 17025 / ATH 2.4.3) (Rhodobacter sphaeroides).